We begin with the raw amino-acid sequence, 56 residues long: Large ribosomal subunit protein bL32 (56 aa).

Residues 1–20 are compositionally biased toward basic residues; that stretch reads MAVPKKKKSKSKRNHRHAVW. Residues 1-21 are disordered; it reads MAVPKKKKSKSKRNHRHAVWK.

It belongs to the bacterial ribosomal protein bL32 family.

In Prochlorococcus marinus (strain MIT 9312), this protein is Large ribosomal subunit protein bL32.